The following is a 217-amino-acid chain: Ribose-5-phosphate isomerase A (217 aa).

Residues 28–31, 81–84, and 94–97 each bind substrate; these read TGST, DGAD, and KGGG. Glu103 acts as the Proton acceptor in catalysis. Lys121 serves as a coordination point for substrate.

This sequence belongs to the ribose 5-phosphate isomerase family. Homodimer.

The enzyme catalyses aldehydo-D-ribose 5-phosphate = D-ribulose 5-phosphate. It functions in the pathway carbohydrate degradation; pentose phosphate pathway; D-ribose 5-phosphate from D-ribulose 5-phosphate (non-oxidative stage): step 1/1. In terms of biological role, catalyzes the reversible conversion of ribose-5-phosphate to ribulose 5-phosphate. In Aeromonas salmonicida (strain A449), this protein is Ribose-5-phosphate isomerase A.